The following is a 520-amino-acid chain: Maturase K (520 aa).

The protein belongs to the intron maturase 2 family. MatK subfamily.

The protein localises to the plastid. It is found in the chloroplast. Its function is as follows. Usually encoded in the trnK tRNA gene intron. Probably assists in splicing its own and other chloroplast group II introns. This chain is Maturase K, found in Iris cristata (Dwarf crested iris).